The following is a 109-amino-acid chain: MFGKGGMGNLMKQAQQMQDKMAKVQEEIARMEVTGEAGAGLVKVTMTGSHSVRKVDIDPSLLEDDKEMLEDLIAAACNDAARRVEENQKDKMAEVTGGMQLPPGMKMPF.

The segment at 88–109 (QKDKMAEVTGGMQLPPGMKMPF) is disordered.

Belongs to the YbaB/EbfC family. Homodimer.

Its subcellular location is the cytoplasm. It localises to the nucleoid. In terms of biological role, binds to DNA and alters its conformation. May be involved in regulation of gene expression, nucleoid organization and DNA protection. The sequence is that of Nucleoid-associated protein Swoo_1794 from Shewanella woodyi (strain ATCC 51908 / MS32).